The sequence spans 244 residues: MDNEEWFPLKQTHYPPPTIPSMKTGHPTGPISIGHIIPDLRHLDNVINCKGFEPFPPNMDVFTAHYEQCHFGDHLNSEFVVQAKAAAPIKNIVPGVDVTGSAGLHHTNITSDRWEYDSVVEYAVYPTRQYIDRLLESKEVKQYIQKSKKLLGGWCVYMVTGIMVARGGGRNVVSEEKGAGVFGNVGFQVPGIGEXAPEVGWDTKTKTKVNAHHTTDFVCAIRLVKIAKSGLRSSWTMKKVTREF.

The disordered stretch occupies residues 1-22 (MDNEEWFPLKQTHYPPPTIPSM).

Belongs to the gasdermin family. As to quaternary structure, heterooligomer; the heterooligomer with rcd-1-1 forms a ring-shaped pore complex when inserted in the membrane.

Its subcellular location is the cytoplasm. The protein resides in the cell membrane. Its function is as follows. Gasdermin-like protein involved in heterokaryon incompatibility, a process that ensures that during spontaneous vegetative cell fusion, only compatible cells from the same colony survive (non-self-recognition). In N.crassa, the rcd-1 locus exists as 2 incompatible alleles, rcd-1-1 (AC Q7SBA0) and rcd-1-2 (this entry). During the allorecognition process, forms a heterooligomer with rcd-1-1, thereby forming a functional gasdermin-like complex that binds to membranes and forms pores, triggering cell death. Binds negatively charged phospholipids, such as cardiolipin and phosphatidylserine. Also binds to phosphoinositides, preferentially to phosphatidylinositol-3-phosphate (PtdIns-3-P), PtdIns-5-P and PtdIns-3,5-P2. This chain is Gasdermin-like protein rcd-1-2, found in Neurospora crassa.